The following is a 313-amino-acid chain: Protein FixB (313 aa).

An FAD-binding site is contributed by 255 to 283; sequence LYLAVGISGQIQHMVGANASQTIFAINKD.

The protein belongs to the ETF alpha-subunit/FixB family. Heterodimer of FixA and FixB.

It functions in the pathway amine and polyamine metabolism; carnitine metabolism. Required for anaerobic carnitine reduction. May bring reductant to CaiA. This is Protein FixB from Escherichia coli O6:K15:H31 (strain 536 / UPEC).